A 144-amino-acid polypeptide reads, in one-letter code: Prefoldin subunit alpha (144 aa).

The protein belongs to the prefoldin alpha subunit family. As to quaternary structure, heterohexamer of two alpha and four beta subunits.

The protein localises to the cytoplasm. In terms of biological role, molecular chaperone capable of stabilizing a range of proteins. Seems to fulfill an ATP-independent, HSP70-like function in archaeal de novo protein folding. The sequence is that of Prefoldin subunit alpha from Methanococcus aeolicus (strain ATCC BAA-1280 / DSM 17508 / OCM 812 / Nankai-3).